The chain runs to 194 residues: DPY30 domain-containing protein 2 (194 aa).

The disordered stretch occupies residues 126 to 172 (EAFEKEPLKQESLPGTSDMIPGMPQQSPSSEPSVSSQVDLNTGTPQE). Residues 149–163 (PQQSPSSEPSVSSQV) show a composition bias toward low complexity.

Belongs to the dpy-30 family.

The polypeptide is DPY30 domain-containing protein 2 (DYDC2) (Bos taurus (Bovine)).